Here is a 481-residue protein sequence, read N- to C-terminus: Glutamyl-tRNA(Gln) amidotransferase subunit A (481 aa).

Residues Lys-78 and Ser-153 each act as charge relay system in the active site. The active-site Acyl-ester intermediate is the Ser-177.

The protein belongs to the amidase family. GatA subfamily. As to quaternary structure, heterotrimer of A, B and C subunits.

The catalysed reaction is L-glutamyl-tRNA(Gln) + L-glutamine + ATP + H2O = L-glutaminyl-tRNA(Gln) + L-glutamate + ADP + phosphate + H(+). Allows the formation of correctly charged Gln-tRNA(Gln) through the transamidation of misacylated Glu-tRNA(Gln) in organisms which lack glutaminyl-tRNA synthetase. The reaction takes place in the presence of glutamine and ATP through an activated gamma-phospho-Glu-tRNA(Gln). The polypeptide is Glutamyl-tRNA(Gln) amidotransferase subunit A (Borreliella afzelii (strain PKo) (Borrelia afzelii)).